A 347-amino-acid polypeptide reads, in one-letter code: Bifunctional methylenetetrahydrofolate dehydrogenase/cyclohydrolase 2, mitochondrial (347 aa).

Substrate-binding positions include 98 to 102 and 145 to 147; these read YVRNK and VQL. NAD(+) contacts are provided by residues 214 to 216 and Arg-247; that span reads GRS. 323–327 contacts substrate; it reads PGGVG.

Belongs to the tetrahydrofolate dehydrogenase/cyclohydrolase family. It depends on Mg(2+) as a cofactor.

It is found in the mitochondrion inner membrane. It catalyses the reaction (6R)-5,10-methylene-5,6,7,8-tetrahydrofolate + NAD(+) = (6R)-5,10-methenyltetrahydrofolate + NADH. The enzyme catalyses (6R)-5,10-methenyltetrahydrofolate + H2O = (6R)-10-formyltetrahydrofolate + H(+). The catalysed reaction is (6R)-5,10-methylene-5,6,7,8-tetrahydrofolate + NADP(+) = (6R)-5,10-methenyltetrahydrofolate + NADPH. Its pathway is one-carbon metabolism; tetrahydrofolate interconversion. Functionally, bifunctional mitochondrial folate-interconverting enzyme that has both NAD/NADP-dependent methylenetetrahydrofolate dehydrogenase and methenyltetrahydrofolate cyclohydrolase activities. This is Bifunctional methylenetetrahydrofolate dehydrogenase/cyclohydrolase 2, mitochondrial from Callithrix jacchus (White-tufted-ear marmoset).